We begin with the raw amino-acid sequence, 475 residues long: tRNA-2-methylthio-N(6)-dimethylallyladenosine synthase (475 aa).

Residues 3–120 (KKLHIKTWGC…LPEMIDQIKD (118 aa)) form the MTTase N-terminal domain. [4Fe-4S] cluster is bound by residues Cys-12, Cys-49, Cys-83, Cys-157, Cys-161, and Cys-164. In terms of domain architecture, Radical SAM core spans 143-375 (RAEGPSAFVS…QDRITQQAMR (233 aa)). The 64-residue stretch at 378-441 (RQMVGTVQRI…TNSLRGVFIR (64 aa)) folds into the TRAM domain.

This sequence belongs to the methylthiotransferase family. MiaB subfamily. In terms of assembly, monomer. The cofactor is [4Fe-4S] cluster.

The protein localises to the cytoplasm. The enzyme catalyses N(6)-dimethylallyladenosine(37) in tRNA + (sulfur carrier)-SH + AH2 + 2 S-adenosyl-L-methionine = 2-methylsulfanyl-N(6)-dimethylallyladenosine(37) in tRNA + (sulfur carrier)-H + 5'-deoxyadenosine + L-methionine + A + S-adenosyl-L-homocysteine + 2 H(+). Functionally, catalyzes the methylthiolation of N6-(dimethylallyl)adenosine (i(6)A), leading to the formation of 2-methylthio-N6-(dimethylallyl)adenosine (ms(2)i(6)A) at position 37 in tRNAs that read codons beginning with uridine. The chain is tRNA-2-methylthio-N(6)-dimethylallyladenosine synthase from Shewanella pealeana (strain ATCC 700345 / ANG-SQ1).